A 196-amino-acid chain; its full sequence is uncharacterized protein (196 aa).

The first 21 residues, 1–21 (MNGKQCFCFFLFHLFYTGLFA), serve as a signal peptide directing secretion. Cys22 carries N-palmitoyl cysteine lipidation. The S-diacylglycerol cysteine moiety is linked to residue Cys22.

It localises to the cell membrane. This is an uncharacterized protein from Treponema pallidum (strain Nichols).